The chain runs to 393 residues: MDTFLFTSESVNEGHPDKLCDQISDAVLDACLEQDPDSKVACETCTKTNLVMIFGEITTKANLDYEKIVRDTCRAVGFVSEDVGLDADNCKVLVNIEQQSPDIAQGVHGHLTKRPEEIGAGDQGHMFGYATDETPELMPLSHVLATKLGARLTEVRKNGTCPWLRPDGKTQVTVEYFNDHGAMVPIRVHTVLISTQHDETVTNDEIAADLKEHVIKPIVPEKFLDEKTIFHLNPSGRFVIGGPHGDAGLTGRKIIIDTYGGWGAHGGGAFSGKDPTKVDRSGAYIVRQAAKSIVASGLARRCIVQVSYAIGVPEPLSVFVDTYATGKIPDKEILKIVKESFDFRPGMIAINLDLKRGGNGRFLKTAAYGHFGRDDPDFTWEVVKPLKAEKAQE.

E9 is a Mg(2+) binding site. H15 provides a ligand contact to ATP. Residue E43 coordinates K(+). Residues E56 and Q99 each coordinate L-methionine. ATP-binding positions include 167–169, 235–238, D246, 252–253, A269, K273, and K277; these read DGK, SGRF, and RK. Residue D246 participates in L-methionine binding. An L-methionine-binding site is contributed by K277.

It belongs to the AdoMet synthase family. Homotetramer. Mn(2+) serves as cofactor. The cofactor is Mg(2+). It depends on Co(2+) as a cofactor. K(+) is required as a cofactor.

The protein resides in the cytoplasm. The catalysed reaction is L-methionine + ATP + H2O = S-adenosyl-L-methionine + phosphate + diphosphate. It functions in the pathway amino-acid biosynthesis; S-adenosyl-L-methionine biosynthesis; S-adenosyl-L-methionine from L-methionine: step 1/1. In terms of biological role, catalyzes the formation of S-adenosylmethionine from methionine and ATP. The reaction comprises two steps that are both catalyzed by the same enzyme: formation of S-adenosylmethionine (AdoMet) and triphosphate, and subsequent hydrolysis of the triphosphate. This is S-adenosylmethionine synthase 4 (METK4) from Vitis vinifera (Grape).